Consider the following 321-residue polypeptide: MKKLTLFIGLMALGTTSAWASCWQSNSAYEINMAMGRVVVSPDLPVGSVIATKTWTMPDNNTIYVTCDRNTTLKSDAKVVAAGLVQGANKVYSTAIPGIGLRFSRKGAISMIYPDSYTTTGSSFRLVGSTFTLDIIKTSTTTGSGTLASGPYTEYGPGFTILKTSLNADAITIVSPSCTILGGKNMNVDIGTIKRADLKGVGTWAGGTPFDIKLECSGGVSVSGYANINTSFSGTLATNTSANQGVLLNEKTGNSAAKGVGVQVIKDNTPLEFNKKHNIGTLQSQETRYITLPLHARFYQYAPTTSTGEVESHLVFNLTYD.

A signal peptide spans 1–18 (MKKLTLFIGLMALGTTSA).

Belongs to the fimbrial protein family.

It localises to the fimbrium. The sequence is that of Fimbria adhesin protein (mrkD) from Klebsiella pneumoniae.